The chain runs to 153 residues: Large ribosomal subunit protein bL9 (153 aa).

Belongs to the bacterial ribosomal protein bL9 family.

Binds to the 23S rRNA. This chain is Large ribosomal subunit protein bL9, found in Gloeobacter violaceus (strain ATCC 29082 / PCC 7421).